Consider the following 679-residue polypeptide: DNA-directed RNA polymerase subunit beta' (679 aa).

Residues C69, C71, C87, and C90 each coordinate Zn(2+). Residues D489, D491, and D493 each contribute to the Mg(2+) site.

This sequence belongs to the RNA polymerase beta' chain family. RpoC1 subfamily. As to quaternary structure, in plastids the minimal PEP RNA polymerase catalytic core is composed of four subunits: alpha, beta, beta', and beta''. When a (nuclear-encoded) sigma factor is associated with the core the holoenzyme is formed, which can initiate transcription. Mg(2+) is required as a cofactor. It depends on Zn(2+) as a cofactor.

The protein localises to the plastid. It localises to the chloroplast. It catalyses the reaction RNA(n) + a ribonucleoside 5'-triphosphate = RNA(n+1) + diphosphate. In terms of biological role, DNA-dependent RNA polymerase catalyzes the transcription of DNA into RNA using the four ribonucleoside triphosphates as substrates. This Phalaenopsis aphrodite subsp. formosana (Moth orchid) protein is DNA-directed RNA polymerase subunit beta'.